The chain runs to 288 residues: Bis(5'-nucleosyl)-tetraphosphatase, symmetrical (288 aa).

It belongs to the Ap4A hydrolase family.

The enzyme catalyses P(1),P(4)-bis(5'-adenosyl) tetraphosphate + H2O = 2 ADP + 2 H(+). In terms of biological role, hydrolyzes diadenosine 5',5'''-P1,P4-tetraphosphate to yield ADP. The chain is Bis(5'-nucleosyl)-tetraphosphatase, symmetrical from Pseudomonas putida (strain W619).